Here is a 569-residue protein sequence, read N- to C-terminus: Amyloid-beta A4 precursor protein-binding family A member 3 (569 aa).

N-acetylmethionine is present on Met-1. Disordered regions lie at residues 1–53 (MEFL…MELD) and 124–168 (AQSV…SSPE). Over residues 19-32 (EEPKGPEVPSEDHP) the composition is skewed to basic and acidic residues. Low complexity predominate over residues 132–141 (AQAAPRLLQP). Phosphoserine occurs at positions 166 and 367. Residues 212-376 (DGVLFGAKYL…SASASHPHNG (165 aa)) form the PID domain. 2 consecutive PDZ domains span residues 389–475 (EVCI…IIHC) and 480–554 (TAVI…TMPA).

In terms of assembly, binds to the cytoplasmic domain of amyloid protein (APP). Interacts with HIF1AN (via N-terminus). Interacts with NECAB3; seems to mediate the interaction between NECAB3 and HIF1AN. In terms of tissue distribution, ubiquitous.

It is found in the cytoplasm. Its subcellular location is the perinuclear region. May modulate processing of the amyloid-beta precursor protein (APP) and hence formation of APP-beta. May enhance the activity of HIF1A in macrophages by inhibiting the activity of HIF1AN. This is Amyloid-beta A4 precursor protein-binding family A member 3 (Apba3) from Rattus norvegicus (Rat).